We begin with the raw amino-acid sequence, 77 residues long: Acyl carrier protein (77 aa).

The Carrier domain maps to 2 to 77; that stretch reads SNIEERVRNI…SAIDYVVNNG (76 aa). Residue Ser-37 is modified to O-(pantetheine 4'-phosphoryl)serine.

This sequence belongs to the acyl carrier protein (ACP) family. In terms of processing, 4'-phosphopantetheine is transferred from CoA to a specific serine of apo-ACP by AcpS. This modification is essential for activity because fatty acids are bound in thioester linkage to the sulfhydryl of the prosthetic group.

The protein resides in the cytoplasm. The protein operates within lipid metabolism; fatty acid biosynthesis. Carrier of the growing fatty acid chain in fatty acid biosynthesis. In Psychromonas ingrahamii (strain DSM 17664 / CCUG 51855 / 37), this protein is Acyl carrier protein.